Reading from the N-terminus, the 560-residue chain is Proteasome-associated ATPase (560 aa).

The segment covering 1 to 19 (MSQQHDDRRPPDTADRDLA) has biased composition (basic and acidic residues). The interval 1 to 21 (MSQQHDDRRPPDTADRDLARQ) is disordered. A coiled-coil region spans residues 16 to 55 (RDLARQATSLAEKNERLTAALTAARAQLVEMKAQLEEVSK). 237–242 (GCGKTL) is an ATP binding site. A docks into pockets in the proteasome alpha-ring region spans residues 559–560 (YL).

It belongs to the AAA ATPase family. Homohexamer. Assembles into a hexameric ring structure that caps the 20S proteasome core. Strongly interacts with the prokaryotic ubiquitin-like protein Pup through a hydrophobic interface; the interacting region of ARC lies in its N-terminal coiled-coil domain. There is one Pup binding site per ARC hexamer ring. Upon ATP-binding, the C-terminus of ARC interacts with the alpha-rings of the proteasome core, possibly by binding to the intersubunit pockets.

It participates in protein degradation; proteasomal Pup-dependent pathway. Its function is as follows. ATPase which is responsible for recognizing, binding, unfolding and translocation of pupylated proteins into the bacterial 20S proteasome core particle. May be essential for opening the gate of the 20S proteasome via an interaction with its C-terminus, thereby allowing substrate entry and access to the site of proteolysis. Thus, the C-termini of the proteasomal ATPase may function like a 'key in a lock' to induce gate opening and therefore regulate proteolysis. The sequence is that of Proteasome-associated ATPase from Beutenbergia cavernae (strain ATCC BAA-8 / DSM 12333 / CCUG 43141 / JCM 11478 / NBRC 16432 / NCIMB 13614 / HKI 0122).